We begin with the raw amino-acid sequence, 385 residues long: UPF0284 protein A9601_04941 (385 aa).

The protein belongs to the UPF0284 family.

This is UPF0284 protein A9601_04941 from Prochlorococcus marinus (strain AS9601).